The chain runs to 244 residues: 5-oxoprolinase subunit A (244 aa).

This sequence belongs to the LamB/PxpA family. In terms of assembly, forms a complex composed of PxpA, PxpB and PxpC.

It carries out the reaction 5-oxo-L-proline + ATP + 2 H2O = L-glutamate + ADP + phosphate + H(+). In terms of biological role, catalyzes the cleavage of 5-oxoproline to form L-glutamate coupled to the hydrolysis of ATP to ADP and inorganic phosphate. In Salmonella heidelberg (strain SL476), this protein is 5-oxoprolinase subunit A.